A 367-amino-acid chain; its full sequence is DNA polymerase IV (367 aa).

Residues 14-198 (IIHIDMDAFF…LPIAKFHGVG (185 aa)) form the UmuC domain. Mg(2+)-binding residues include D18 and D116. E117 is an active-site residue.

The protein belongs to the DNA polymerase type-Y family. Monomer. Mg(2+) serves as cofactor.

It is found in the cytoplasm. The catalysed reaction is DNA(n) + a 2'-deoxyribonucleoside 5'-triphosphate = DNA(n+1) + diphosphate. Functionally, poorly processive, error-prone DNA polymerase involved in untargeted mutagenesis. Copies undamaged DNA at stalled replication forks, which arise in vivo from mismatched or misaligned primer ends. These misaligned primers can be extended by PolIV. Exhibits no 3'-5' exonuclease (proofreading) activity. May be involved in translesional synthesis, in conjunction with the beta clamp from PolIII. This chain is DNA polymerase IV, found in Streptococcus thermophilus (strain ATCC BAA-491 / LMD-9).